Consider the following 333-residue polypeptide: Adenosine deaminase (333 aa).

Residues His-12 and His-14 each coordinate Zn(2+). Substrate contacts are provided by His-14, Asp-16, and Gly-170. Position 197 (His-197) interacts with Zn(2+). Glu-200 functions as the Proton donor in the catalytic mechanism. A Zn(2+)-binding site is contributed by Asp-278. A substrate-binding site is contributed by Asp-279.

Belongs to the metallo-dependent hydrolases superfamily. Adenosine and AMP deaminases family. Adenosine deaminase subfamily. It depends on Zn(2+) as a cofactor.

The catalysed reaction is adenosine + H2O + H(+) = inosine + NH4(+). The enzyme catalyses 2'-deoxyadenosine + H2O + H(+) = 2'-deoxyinosine + NH4(+). Catalyzes the hydrolytic deamination of adenosine and 2-deoxyadenosine. This is Adenosine deaminase from Escherichia coli O45:K1 (strain S88 / ExPEC).